The chain runs to 822 residues: MAIRSWTPEGFVNKKLVRPASVSTNLSLELCTFPTTLGSSVAANALEQLFVVEKSLQGDYFTCSEEVKTFLKDITVAVKKLEEMRKNTVELLEIESMELSRLYFLLETVPNSIHRELEECIADARKLNIIEISQIKRKIETMNNEVKFLTNKISELKSMNEVLGAKQAELAKRHEQYVLLLNQTLEEKAAATIYINDTYTRMNFEREEIELQKQCMQETTQLIEKQKQDYLEKKEYLAIRIKETKQSCDDKRKETYYKKKELTRLQNKIIKMKQTVTSGSVMISDQSIEINILHEAITIWKKKVEDMRRLCESLEEKLSFFVTQKQNLDTTSTEKKNAFVNKIQKLGEKIYKLNTENEDLREKLSTLLKQYKATLKEEEAVSLKKQMLSEEHQKQMMVITQKEAFLSQREHDIKFMENGFGVLNDLNRASREAYGRQIEVMAKNRQREIQRCVINQWRIFCTRKRHAHWLQKIKLSLKKIIIQIEIVEQKRFQLLEETKHRKKEINHFVHLIETLKEQLAQDKKDYVKKEERLIEELGTYETLILNEIQINKVKEEELGETLPQLQVAEEDFREKNRMLRSLHSDVSAKKQDEKTMSNTIFRYRKDIIRCTDGTENMKREIKHLRDLESEKTHKHFEILKNLENEIYVNDQKMALLILENQKLREYLAYLKKEINEYASKQVVTVQHSGDLSWQLIVQHSHYSDLLSGFQIIIKELVGTGEDTMQEIKSLVAKLQYRDEKIESISTWLVGGFERLRRLMEEDSPASLSKEDLQKLGKKQKNQEILRFSPSSHARRLTLSRICKMLKKQSRSRKKKHRPRTII.

Coiled-coil stretches lie at residues 129-164 (IIEI…EVLG), 223-397 (IEKQ…KQMM), and 510-537 (HLIE…IEEL).

The protein is Coiled-coil domain-containing protein 175 (Ccdc175) of Mus musculus (Mouse).